The primary structure comprises 952 residues: Translation initiation factor IF-2 (952 aa).

Disordered regions lie at residues 74–95, 153–204, 230–256, and 273–319; these read QRRLSRLEEQSRKTYEKERQLK, AAQA…KEEP, MHSPFDRSSEAERKKKNRKKNFKEQAD, and DEKG…DVND. Residues 153–168 show a composition bias toward low complexity; it reads AAQADQTDQTDQTDQA. The span at 232–242 shows a compositional bias: basic and acidic residues; the sequence is SPFDRSSEAER. A compositionally biased stretch (low complexity) spans 286–303; the sequence is PGETNAATPAGTASTAGA. A tr-type G domain is found at 449 to 619; it reads IRPPVITIMG…LAEAEIRELK (171 aa). The G1 stretch occupies residues 458–465; the sequence is GHVDHGKT. 458–465 is a GTP binding site; sequence GHVDHGKT. Residues 483–487 form a G2 region; the sequence is GITQH. The interval 505-508 is G3; sequence DTPG. GTP contacts are provided by residues 505–509 and 559–562; these read DTPGH and NKVD. The interval 559 to 562 is G4; the sequence is NKVD. The segment at 595 to 597 is G5; the sequence is SAK.

This sequence belongs to the TRAFAC class translation factor GTPase superfamily. Classic translation factor GTPase family. IF-2 subfamily.

The protein localises to the cytoplasm. One of the essential components for the initiation of protein synthesis. Protects formylmethionyl-tRNA from spontaneous hydrolysis and promotes its binding to the 30S ribosomal subunits. Also involved in the hydrolysis of GTP during the formation of the 70S ribosomal complex. The chain is Translation initiation factor IF-2 from Chlorobium limicola (strain DSM 245 / NBRC 103803 / 6330).